Reading from the N-terminus, the 182-residue chain is Translation initiation factor IF-3, chloroplastic (182 aa).

It belongs to the IF-3 family. In terms of assembly, monomer.

It localises to the plastid. Its subcellular location is the chloroplast. Its function is as follows. IF-3 binds to the 30S ribosomal subunit and shifts the equilibrium between 70S ribosomes and their 50S and 30S subunits in favor of the free subunits, thus enhancing the availability of 30S subunits on which protein synthesis initiation begins. The protein is Translation initiation factor IF-3, chloroplastic of Porphyra purpurea (Red seaweed).